The following is a 133-amino-acid chain: Large ribosomal subunit protein uL14 (133 aa).

It belongs to the universal ribosomal protein uL14 family. As to quaternary structure, part of the 50S ribosomal subunit. Forms a cluster with proteins L3 and L24e, part of which may contact the 16S rRNA in 2 intersubunit bridges.

Its function is as follows. Binds to 23S rRNA. Forms part of two intersubunit bridges in the 70S ribosome. In Methanopyrus kandleri (strain AV19 / DSM 6324 / JCM 9639 / NBRC 100938), this protein is Large ribosomal subunit protein uL14.